Consider the following 360-residue polypeptide: Photosystem II protein D1 1 (360 aa).

The next 3 helical transmembrane spans lie at 29–46 (YVGW…AATV), 118–133 (HFLI…QWEL), and 142–156 (WICV…SATA). His118 contacts chlorophyll a. Tyr126 provides a ligand contact to pheophytin a. The [CaMn4O5] cluster site is built by Asp170 and Glu189. Residues 197–218 (FHMLGVAGVFGGSLFSAMHGSL) traverse the membrane as a helical segment. Residue His198 participates in chlorophyll a binding. A quinone is bound by residues His215 and 264-265 (SF). Residue His215 participates in Fe cation binding. His272 contacts Fe cation. The chain crosses the membrane as a helical span at residues 274-288 (FLAAWPVIGIWFTAL). [CaMn4O5] cluster is bound by residues His332, Glu333, Asp342, and Ala344. Positions 345-360 (AGEVAPVALTAPAING) are excised as a propeptide.

The protein belongs to the reaction center PufL/M/PsbA/D family. PSII is composed of 1 copy each of membrane proteins PsbA, PsbB, PsbC, PsbD, PsbE, PsbF, PsbH, PsbI, PsbJ, PsbK, PsbL, PsbM, PsbT, PsbX, PsbY, PsbZ, Psb30/Ycf12, peripheral proteins PsbO, CyanoQ (PsbQ), PsbU, PsbV and a large number of cofactors. It forms dimeric complexes. Requires The D1/D2 heterodimer binds P680, chlorophylls that are the primary electron donor of PSII, and subsequent electron acceptors. It shares a non-heme iron and each subunit binds pheophytin, quinone, additional chlorophylls, carotenoids and lipids. D1 provides most of the ligands for the Mn4-Ca-O5 cluster of the oxygen-evolving complex (OEC). There is also a Cl(-1) ion associated with D1 and D2, which is required for oxygen evolution. The PSII complex binds additional chlorophylls, carotenoids and specific lipids. as cofactor. In terms of processing, tyr-161 forms a radical intermediate that is referred to as redox-active TyrZ, YZ or Y-Z. Post-translationally, C-terminally processed by CtpA; processing is essential to allow assembly of the oxygen-evolving complex and thus photosynthetic growth.

The protein localises to the cellular thylakoid membrane. The catalysed reaction is 2 a plastoquinone + 4 hnu + 2 H2O = 2 a plastoquinol + O2. Its function is as follows. Photosystem II (PSII) is a light-driven water:plastoquinone oxidoreductase that uses light energy to abstract electrons from H(2)O, generating O(2) and a proton gradient subsequently used for ATP formation. It consists of a core antenna complex that captures photons, and an electron transfer chain that converts photonic excitation into a charge separation. The D1/D2 (PsbA/PsbD) reaction center heterodimer binds P680, the primary electron donor of PSII as well as several subsequent electron acceptors. This is Photosystem II protein D1 1 from Nostoc sp. (strain PCC 7120 / SAG 25.82 / UTEX 2576).